We begin with the raw amino-acid sequence, 425 residues long: Putative dipeptidase MGYG_00085 (425 aa).

Residues 1-31 form the signal peptide; sequence MAPERRSRLSETAGLFVSLLALTSIVPVQAV. Residues His56, Asp58, and Glu168 each contribute to the Zn(2+) site. The cysteines at positions 107 and 197 are disulfide-linked. His195 provides a ligand contact to substrate. Zn(2+) is bound by residues His239 and His260. Residues Arg271 and Asp331 each coordinate substrate. An N-linked (GlcNAc...) asparagine glycan is attached at Asn403.

It belongs to the metallo-dependent hydrolases superfamily. Peptidase M19 family. Zn(2+) serves as cofactor.

It catalyses the reaction an L-aminoacyl-L-amino acid + H2O = 2 an L-alpha-amino acid. Its function is as follows. Hydrolyzes a wide range of dipeptides. This Arthroderma gypseum (strain ATCC MYA-4604 / CBS 118893) (Microsporum gypseum) protein is Putative dipeptidase MGYG_00085.